The chain runs to 339 residues: Probable thylakoid lumen protein sll0997 (339 aa).

An N-terminal signal peptide occupies residues 1–26 (MAPYQSFHIGLLGLALASVWPLSACA).

Its subcellular location is the cellular thylakoid lumen. The protein is Probable thylakoid lumen protein sll0997 of Synechocystis sp. (strain ATCC 27184 / PCC 6803 / Kazusa).